A 72-amino-acid polypeptide reads, in one-letter code: Dermaseptin-A4 (72 aa).

A signal peptide spans 1–22 (MAFLKKSLFLVLFLGMVSLSIC). The propeptide occupies 23–41 (EEEKREEENEQEDDEQSEE). Residues 24–43 (EEKREEENEQEDDEQSEEKR) are disordered. The segment covering 30–39 (ENEQEDDEQS) has biased composition (acidic residues). An Alanine amide modification is found at Ala69. A propeptide spanning residues 71 to 72 (EQ) is cleaved from the precursor.

Belongs to the frog skin active peptide (FSAP) family. Dermaseptin subfamily. In terms of tissue distribution, expressed by the skin glands.

It localises to the secreted. In terms of biological role, possesses a potent antimicrobial activity against Gram-positive and Gram-negative bacteria. Probably acts by disturbing membrane functions with its amphipathic structure. This is Dermaseptin-A4 from Agalychnis annae (Blue-sided leaf frog).